We begin with the raw amino-acid sequence, 188 residues long: V-type ATP synthase subunit E (188 aa).

The protein belongs to the V-ATPase E subunit family.

Functionally, produces ATP from ADP in the presence of a proton gradient across the membrane. In Thermus thermophilus (strain ATCC 27634 / DSM 579 / HB8), this protein is V-type ATP synthase subunit E (atpE).